A 281-amino-acid chain; its full sequence is Thioesterase PikA5 (281 aa).

Residues 26–249 (RLVCLPHAGG…WHEICNDISD (224 aa)) are thioesterase. The Nucleophile; for thioesterase activity role is filled by Ser99. The Proton acceptor; for thioesterase activity role is filled by His233.

This sequence belongs to the thioesterase family.

Its pathway is antibiotic biosynthesis. Functionally, involved in the biosynthesis of 12- and 14-membered ring macrolactone antibiotics such as methymycin, neomethymycin, narbomycin and pikromycin. Responsible for removing mis-formed acyl moieties (aberrant decarboxylation) that are bound to the PKS and could block it. Catalyzes the cleavage of methylmalonyl-[acp]. It exhibits some acyl-group specificity, and catalyzes the cleavage of propionyl and butyryl derivatives faster than acetyl malonyl or methylmalonyl derivatives. The sequence is that of Thioesterase PikA5 from Streptomyces venezuelae.